A 767-amino-acid chain; its full sequence is GPI ethanolamine phosphate transferase 2 (767 aa).

N-linked (GlcNAc...) asparagine glycans are attached at residues Asn-186 and Asn-401. 2 helical membrane passes run 407 to 427 (LGLF…YGLG) and 434 to 454 (VTFL…SSYV). Asn-490 carries N-linked (GlcNAc...) asparagine glycosylation. 3 consecutive transmembrane segments (helical) span residues 513-533 (ILWA…CLNS), 538-558 (IWRS…LVFV), and 595-615 (IPIF…KMSA). N-linked (GlcNAc...) asparagine glycosylation occurs at Asn-627. A run of 3 helical transmembrane segments spans residues 655-675 (SVVL…IWWA), 695-715 (TLLT…CTML), and 733-755 (LAWT…SQVL).

It belongs to the PIGG/PIGN/PIGO family. PIGG subfamily.

It is found in the endoplasmic reticulum membrane. It functions in the pathway glycolipid biosynthesis; glycosylphosphatidylinositol-anchor biosynthesis. In terms of biological role, ethanolamine phosphate transferase involved in glycosylphosphatidylinositol-anchor biosynthesis. Transfers ethanolamine phosphate to the GPI second mannose. The protein is GPI ethanolamine phosphate transferase 2 (las21) of Aspergillus fumigatus (strain ATCC MYA-4609 / CBS 101355 / FGSC A1100 / Af293) (Neosartorya fumigata).